A 92-amino-acid polypeptide reads, in one-letter code: C-C motif chemokine 4 (92 aa).

The first 23 residues, 1–23 (MKLCVTVLSLLMLVAAFCSPALS), serve as a signal peptide directing secretion. Disulfide bonds link cysteine 34–cysteine 58 and cysteine 35–cysteine 74.

Belongs to the intercrine beta (chemokine CC) family. Homodimer and heterodimer of MIP-1-alpha(4-69) and MIP-1-beta(3-69). Post-translationally, N-terminal processed form MIP-1-beta(3-69) is produced by proteolytic cleavage after secretion from peripheral blood lymphocytes.

The protein localises to the secreted. Functionally, monokine with inflammatory and chemokinetic properties. Binds to CCR5. One of the major HIV-suppressive factors produced by CD8+ T-cells. Recombinant MIP-1-beta induces a dose-dependent inhibition of different strains of HIV-1, HIV-2, and simian immunodeficiency virus (SIV). The processed form MIP-1-beta(3-69) retains the abilities to induce down-modulation of surface expression of the chemokine receptor CCR5 and to inhibit the CCR5-mediated entry of HIV-1 in T-cells. MIP-1-beta(3-69) is also a ligand for CCR1 and CCR2 isoform B. In Homo sapiens (Human), this protein is C-C motif chemokine 4 (CCL4).